Reading from the N-terminus, the 73-residue chain is Translation initiation factor IF-1 (73 aa).

Positions 1-73 (MAKKEDTIVL…TKARVVYRHR (73 aa)) constitute an S1-like domain.

This sequence belongs to the IF-1 family. Component of the 30S ribosomal translation pre-initiation complex which assembles on the 30S ribosome in the order IF-2 and IF-3, IF-1 and N-formylmethionyl-tRNA(fMet); mRNA recruitment can occur at any time during PIC assembly.

It localises to the cytoplasm. Its function is as follows. One of the essential components for the initiation of protein synthesis. Stabilizes the binding of IF-2 and IF-3 on the 30S subunit to which N-formylmethionyl-tRNA(fMet) subsequently binds. Helps modulate mRNA selection, yielding the 30S pre-initiation complex (PIC). Upon addition of the 50S ribosomal subunit IF-1, IF-2 and IF-3 are released leaving the mature 70S translation initiation complex. The sequence is that of Translation initiation factor IF-1 from Chlamydia caviae (strain ATCC VR-813 / DSM 19441 / 03DC25 / GPIC) (Chlamydophila caviae).